The chain runs to 84 residues: Large ribosomal subunit protein eL34 (84 aa).

This sequence belongs to the eukaryotic ribosomal protein eL34 family.

The sequence is that of Large ribosomal subunit protein eL34 from Pyrobaculum islandicum (strain DSM 4184 / JCM 9189 / GEO3).